Consider the following 99-residue polypeptide: Cell division protein FtsB (99 aa).

Residues 1–3 lie on the Cytoplasmic side of the membrane; the sequence is MRV. A helical membrane pass occupies residues 4 to 21; it reads FTAILLILLVLLQYRLWF. At 22–99 the chain is on the periplasmic side; it reads GKNSVPDYLV…KENSTRNVNN (78 aa). Residues 29-53 are a coiled coil; sequence YLVLKENVVRQQSANEKLQQRNKLL.

The protein belongs to the FtsB family. In terms of assembly, part of a complex composed of FtsB, FtsL and FtsQ.

Its subcellular location is the cell inner membrane. Essential cell division protein. May link together the upstream cell division proteins, which are predominantly cytoplasmic, with the downstream cell division proteins, which are predominantly periplasmic. This chain is Cell division protein FtsB, found in Colwellia psychrerythraea (strain 34H / ATCC BAA-681) (Vibrio psychroerythus).